The chain runs to 662 residues: MGKFIQWIKQPSISKPLIAAFLAVLILPVGVLAYFSYQSAWNALDRELISSAKGNVEELNSTLQNKLEDKVKAIDYYSETVDKDILLGKNKTLLKEKFKQYTTLNDDVGAIYAASEDKKLYKYPDSGVPKGFDPTGRDWYKQAVAEKGQAVFSEPYTDEATGDIVVTISKQLKDGSGVIALDLNLDEVLTASKRIKIGKEGFAFITTGNKKYIAHPTIKPGTTGSGDWTNQVYSKKEGSFEYTFEGKEKKMAFTTNKLTGWKIAGTYFVSELQDASSPVLNTAVIILCVSIVIGGILILYIIRAITKPLRKLVSTSAKISSGDLTEVIDIHSKNEFGQLGESFNEMSASLRSVIGVIQTSVENVASSSEELTASAAQTSKATEHITLAIEQFSDGNEAQSEKLETSSNHLSQMNEGISKVAQASSTITKSSIQSSEAAGSGEKLVEHTVGQMKTIDQSVQKAEAVVKGLETKSQDITSILNVINGIADQTNLLALNAAIEAARAGEYGRGFSVVAEEVRKLAVQSADSAKEIEGLIQEIVREISTSLSMFQSVNHEVKEGLQITDQTAESFKQIYEMTTQISGELQNLNATVEQLSAGSQEVSSAVEDISAVAKESSAGIQDIAASAEEQLASMEEISSSAETLANMAEELQDITKKFKIES.

The Cytoplasmic segment spans residues 1 to 16; it reads MGKFIQWIKQPSISKP. The chain crosses the membrane as a helical span at residues 17–37; that stretch reads LIAAFLAVLILPVGVLAYFSY. The Extracellular portion of the chain corresponds to 38-281; the sequence is QSAWNALDRE…LQDASSPVLN (244 aa). Residues 153 to 228 enclose the Cache domain; it reads SEPYTDEATG…KPGTTGSGDW (76 aa). A helical transmembrane segment spans residues 282–302; the sequence is TAVIILCVSIVIGGILILYII. The region spanning 303 to 355 is the HAMP domain; the sequence is RAITKPLRKLVSTSAKISSGDLTEVIDIHSKNEFGQLGESFNEMSASLRSVIG. Over 303–662 the chain is Cytoplasmic; the sequence is RAITKPLRKL…DITKKFKIES (360 aa). Position 370 is a glutamate methyl ester (Glu) (Glu-370). In terms of domain architecture, Methyl-accepting transducer spans 374-610; it reads SAAQTSKATE…EVSSAVEDIS (237 aa). Gln-594 carries the glutamate methyl ester (Gln) modification. A glutamate methyl ester (Glu) mark is found at Glu-629 and Glu-636.

Belongs to the methyl-accepting chemotaxis (MCP) protein family.

It localises to the cell membrane. In terms of biological role, chemotactic-signal transducers respond to changes in the concentration of attractants and repellents in the environment, transduce a signal from the outside to the inside of the cell, and facilitate sensory adaptation through the variation of the level of methylation. All amino acids serve as attractants in B.subtilis, they appear to cause an increase in the turnover methyl groups, leading to methylation of an unidentified acceptor, while repellents have been shown to cause a decrease in methyl group turnover. The methyl groups are added by a methyltransferase and removed by a methylesterase. The polypeptide is Methyl-accepting chemotaxis protein TlpB (tlpB) (Bacillus subtilis (strain 168)).